The chain runs to 72 residues: Translation initiation factor IF-1 (72 aa).

The S1-like domain occupies 1–72 (MSKEDMIEFS…TKGRITFRFK (72 aa)).

It belongs to the IF-1 family. In terms of assembly, component of the 30S ribosomal translation pre-initiation complex which assembles on the 30S ribosome in the order IF-2 and IF-3, IF-1 and N-formylmethionyl-tRNA(fMet); mRNA recruitment can occur at any time during PIC assembly.

It localises to the cytoplasm. Its function is as follows. One of the essential components for the initiation of protein synthesis. Stabilizes the binding of IF-2 and IF-3 on the 30S subunit to which N-formylmethionyl-tRNA(fMet) subsequently binds. Helps modulate mRNA selection, yielding the 30S pre-initiation complex (PIC). Upon addition of the 50S ribosomal subunit IF-1, IF-2 and IF-3 are released leaving the mature 70S translation initiation complex. This is Translation initiation factor IF-1 from Acidiphilium cryptum (strain JF-5).